A 473-amino-acid chain; its full sequence is Reticulon-4 receptor (473 aa).

Residues 1–26 form the signal peptide; it reads MKRASSGGSRLLAWVLWLQAWRVATP. 2 disulfides stabilise this stretch: Cys-27-Cys-33 and Cys-31-Cys-43. An LRRNT domain is found at 27–57; the sequence is CPGACVCYNEPKVTTSCPQQGLQAVPTGIPA. LRR repeat units follow at residues 56–79, 80–103, 105–128, 129–152, 153–176, 178–200, 202–224, 225–248, and 250–273; these read PASS…SFQS, CRNL…AFTG, TLLE…TFRG, LGHL…LFRG, LAAL…TFRD, GNLT…AFRG, HSLD…AFRD, LGRL…VLVP, and RSLQ…PLWA. Asn-82 is a glycosylation site (N-linked (GlcNAc...) asparagine). The region spanning 260–310 is the LRRCT domain; the sequence is NPWVCDCRARPLWAWLQKFRGSSSEVPCNLPQRLAGRDLKRLAASDLEGCA. 3 cysteine pairs are disulfide-bonded: Cys-264–Cys-287, Cys-266–Cys-335, and Cys-309–Cys-336. The disordered stretch occupies residues 346–446; sequence VLEPGRPASA…GSSGTGDAEG (101 aa). The N-linked (GlcNAc...) asparagine glycan is linked to Asn-372. The span at 413-429 shows a compositional bias: basic residues; it reads PRRRPGCSRKNRTRSHC. A compositionally biased stretch (gly residues) spans 434–445; the sequence is AGSGSSGTGDAE. The GPI-anchor amidated serine moiety is linked to residue Ser-447. A propeptide spans 448 to 473 (removed in mature form); it reads GALPALACSLAPLGLALVLWTVLGPC.

Belongs to the Nogo receptor family. Homodimer. Interacts with MAG. Interacts with RTN4 and OMG. Interacts with LINGO1 and NGFR. Interacts with KIAA0319L. Interacts with OLFM1; this inhibits interaction with LINGO1 and NGFR. Post-translationally, N-glycosylated. O-glycosylated. Contains terminal sialic acid groups on its glycan chains. As to expression, detected in embryonic cerebellum, in spinal cord motor neurons and in dorsal root ganglia. Detected in adult brain, in neocortex, hippocampus, striatum, thalamus and dorsal root ganglion neurons (at protein level).

It localises to the cell membrane. It is found in the membrane raft. Its subcellular location is the cell projection. The protein localises to the dendrite. The protein resides in the perikaryon. It localises to the axon. Receptor for RTN4, OMG and MAG. Functions as a receptor for the sialylated gangliosides GT1b and GM1. Besides, functions as a receptor for chondroitin sulfate proteoglycans. Can also bind heparin. Intracellular signaling cascades are triggered via the coreceptor NGFR. Signaling mediates activation of Rho and downstream reorganization of the actin cytoskeleton. Mediates axonal growth inhibition. May play a role in regulating axon regeneration and neuronal plasticity in the adult central nervous system. Plays a role in postnatal brain development. Required for normal axon migration across the brain midline and normal formation of the corpus callosum. Protects motoneurons against apoptosis; protection against apoptosis is probably mediated via interaction with MAG. Acts in conjunction with RTN4 and LINGO1 in regulating neuronal precursor cell motility during cortical development. Like other family members, plays a role in restricting the number dendritic spines and the number of synapses that are formed during brain development. The sequence is that of Reticulon-4 receptor (Rtn4r) from Rattus norvegicus (Rat).